Reading from the N-terminus, the 117-residue chain is NADH-ubiquinone oxidoreductase chain 3 (117 aa).

3 helical membrane passes run 4–24, 61–81, and 86–106; these read FLGILIYFFIALALSLLLLGL, LVAILFIIFDLEVAFLFPWAL, and IGYFGFWSMMLFLFILTVGFI.

Belongs to the complex I subunit 3 family.

Its subcellular location is the mitochondrion membrane. It carries out the reaction a ubiquinone + NADH + 5 H(+)(in) = a ubiquinol + NAD(+) + 4 H(+)(out). In terms of biological role, core subunit of the mitochondrial membrane respiratory chain NADH dehydrogenase (Complex I) that is believed to belong to the minimal assembly required for catalysis. Complex I functions in the transfer of electrons from NADH to the respiratory chain. The immediate electron acceptor for the enzyme is believed to be ubiquinone. This Prototheca wickerhamii protein is NADH-ubiquinone oxidoreductase chain 3 (NAD3).